Here is a 57-residue protein sequence, read N- to C-terminus: Large ribosomal subunit protein bL32 (57 aa).

The span at 1–16 (MAVQKSRKTPSRRGMR) shows a compositional bias: basic residues. Positions 1-37 (MAVQKSRKTPSRRGMRRSHDALSTTAITVDETTGELH) are disordered. A compositionally biased stretch (polar residues) spans 21–31 (ALSTTAITVDE).

Belongs to the bacterial ribosomal protein bL32 family.

This is Large ribosomal subunit protein bL32 from Hydrogenovibrio crunogenus (strain DSM 25203 / XCL-2) (Thiomicrospira crunogena).